The following is a 457-amino-acid chain: UDP-N-acetylmuramate--L-alanyl-gamma-D-glutamyl-meso-2,6-diaminoheptandioate ligase (457 aa).

110–116 (GTHGKTT) serves as a coordination point for ATP.

It belongs to the MurCDEF family. Mpl subfamily. The cofactor is Mg(2+).

The protein resides in the secreted. The catalysed reaction is UDP-N-acetyl-alpha-D-muramate + L-alanyl-gamma-D-glutamyl-meso-2,6-diaminopimelate + ATP = UDP-N-acetyl-alpha-D-muramoyl-L-alanyl-gamma-D-glutamyl-meso-2,6-diaminopimelate + ADP + phosphate + H(+). It functions in the pathway cell wall biogenesis; peptidoglycan recycling. In terms of biological role, reutilizes the intact tripeptide L-alanyl-gamma-D-glutamyl-meso-diaminopimelate by linking it to UDP-N-acetylmuramate. The enzyme can also use the tetrapeptide L-alanyl-gamma-D-glutamyl-meso-2,6-diaminoheptanedioyl-D-alanine or the pentapeptide L-alanyl-gamma-D-glutamyl-meso-2,6-diaminoheptandioyl-D-alanyl-D-alanine in vivo and in vitro. The polypeptide is UDP-N-acetylmuramate--L-alanyl-gamma-D-glutamyl-meso-2,6-diaminoheptandioate ligase (Escherichia coli (strain K12)).